The chain runs to 108 residues: T-cell acute lymphocytic leukemia protein 2 (108 aa).

In terms of domain architecture, bHLH spans 2–54; the sequence is TRKIFTNTRERWRQQNVNSAFAKLRKLIPTHPPDKKLSKNETLRLAMRYINFL. The segment at 89-108 is disordered; sequence DRTLLENYQVPSPGPSHHIP.

The polypeptide is T-cell acute lymphocytic leukemia protein 2 (TAL2) (Homo sapiens (Human)).